A 660-amino-acid chain; its full sequence is Galactocerebrosidase (660 aa).

Residues 1 to 18 (MQTHNFLCIISVILGCSA) form the signal peptide. Substrate contacts are provided by Thr-87 and Trp-129. N-linked (GlcNAc...) asparagine glycosylation is present at Asn-147. Residue Asn-175 participates in substrate binding. Catalysis depends on Glu-176, which acts as the Proton donor/acceptor. The active-site Nucleophile is the Glu-251. Cys-264 and Cys-371 are joined by a disulfide. N-linked (GlcNAc...) asparagine glycans are attached at residues Asn-293 and Asn-356. Arg-373 is a substrate binding site. Residues Asn-413, Asn-465, Asn-495, Asn-499, Asn-537, and Asn-578 are each glycosylated (N-linked (GlcNAc...) asparagine).

This sequence belongs to the glycosyl hydrolase 59 family.

The protein localises to the lysosome. It catalyses the reaction a beta-D-galactosyl-(1&lt;-&gt;1')-N-acylsphing-4-enine + H2O = an N-acylsphing-4-enine + D-galactose. The enzyme catalyses beta-D-galactosyl-(1&lt;-&gt;1)-sphing-4-enine + H2O = sphing-4-enine + D-galactose. The catalysed reaction is a D-galactosylceramide + H2O = an N-acyl-sphingoid base + D-galactose. Functionally, hydrolyzes the galactose ester bonds of glycolipids such as galactosylceramide and galactosylsphingosine. In Danio rerio (Zebrafish), this protein is Galactocerebrosidase.